The primary structure comprises 121 residues: Alpha-endosulfine (121 aa).

Residues 1–53 (MSQKQEEENPAEETGEEKQDTQEKEGILPERAEEAKLKAKYPSLGQKPGGSDF) are disordered. S2 is subject to N-acetylserine. A Phosphoserine modification is found at S2. The segment covering 16–37 (EEKQDTQEKEGILPERAEEAKL) has biased composition (basic and acidic residues). T21 carries the post-translational modification Phosphothreonine. At S43 the chain carries Phosphoserine. S67 carries the phosphoserine; by GWL modification. The segment at 79 to 121 (NKQLPSAGPDKNLVTGDHIPTPQDLPQRKSSLVTSKLAGGQVE) is disordered. The residue at position 109 (S109) is a Phosphoserine; by PKA.

This sequence belongs to the endosulfine family. Interacts (when phosphorylated at Ser-67) with PPP2R2D. Interacts with ABCC8. Interacts with SNCA; interaction is disrupted when phosphorylated at Ser-109. Post-translationally, phosphorylation at Ser-67 by GWL during mitosis is essential for interaction with PPP2R2D (PR55-delta) and subsequent inactivation of PP2A. Phosphorylated by PKA. Widely expressed with high levels in skeletal muscle and brain and lower levels in the pancreas.

It is found in the cytoplasm. Functionally, protein phosphatase inhibitor that specifically inhibits protein phosphatase 2A (PP2A) during mitosis. When phosphorylated at Ser-67 during mitosis, specifically interacts with PPP2R2D (PR55-delta) and inhibits its activity, leading to inactivation of PP2A, an essential condition to keep cyclin-B1-CDK1 activity high during M phase. Also acts as a stimulator of insulin secretion by interacting with sulfonylurea receptor (ABCC8), thereby preventing sulfonylurea from binding to its receptor and reducing K(ATP) channel currents. The protein is Alpha-endosulfine (ENSA) of Homo sapiens (Human).